The sequence spans 476 residues: Bifunctional protein HldE (476 aa).

Residues 1-318 (MKVTLPDFRR…ENAIRGRAET (318 aa)) are ribokinase. Residue 195 to 198 (NLSE) participates in ATP binding. The active site involves D264. The cytidylyltransferase stretch occupies residues 344 to 476 (MTNGIFDILH…IIQSIKNGRG (133 aa)).

The protein in the N-terminal section; belongs to the carbohydrate kinase PfkB family. In the C-terminal section; belongs to the cytidylyltransferase family. Homodimer.

The enzyme catalyses D-glycero-beta-D-manno-heptose 7-phosphate + ATP = D-glycero-beta-D-manno-heptose 1,7-bisphosphate + ADP + H(+). It carries out the reaction D-glycero-beta-D-manno-heptose 1-phosphate + ATP + H(+) = ADP-D-glycero-beta-D-manno-heptose + diphosphate. It participates in nucleotide-sugar biosynthesis; ADP-L-glycero-beta-D-manno-heptose biosynthesis; ADP-L-glycero-beta-D-manno-heptose from D-glycero-beta-D-manno-heptose 7-phosphate: step 1/4. The protein operates within nucleotide-sugar biosynthesis; ADP-L-glycero-beta-D-manno-heptose biosynthesis; ADP-L-glycero-beta-D-manno-heptose from D-glycero-beta-D-manno-heptose 7-phosphate: step 3/4. Its function is as follows. Catalyzes the phosphorylation of D-glycero-D-manno-heptose 7-phosphate at the C-1 position to selectively form D-glycero-beta-D-manno-heptose-1,7-bisphosphate. Catalyzes the ADP transfer from ATP to D-glycero-beta-D-manno-heptose 1-phosphate, yielding ADP-D-glycero-beta-D-manno-heptose. The protein is Bifunctional protein HldE of Yersinia pestis bv. Antiqua (strain Antiqua).